Here is a 314-residue protein sequence, read N- to C-terminus: Coproporphyrin III ferrochelatase (314 aa).

Fe(2+)-binding residues include histidine 186 and glutamate 268.

Belongs to the ferrochelatase family.

Its subcellular location is the cytoplasm. The enzyme catalyses Fe-coproporphyrin III + 2 H(+) = coproporphyrin III + Fe(2+). Its pathway is porphyrin-containing compound metabolism; protoheme biosynthesis. Its function is as follows. Involved in coproporphyrin-dependent heme b biosynthesis. Catalyzes the insertion of ferrous iron into coproporphyrin III to form Fe-coproporphyrin III. The sequence is that of Coproporphyrin III ferrochelatase from Lactococcus lactis subsp. lactis (strain IL1403) (Streptococcus lactis).